Consider the following 303-residue polypeptide: 2-(5''-triphosphoribosyl)-3'-dephosphocoenzyme-A synthase (303 aa).

It belongs to the CitG/MdcB family.

It catalyses the reaction 3'-dephospho-CoA + ATP = 2'-(5''-triphospho-alpha-D-ribosyl)-3'-dephospho-CoA + adenine. Functionally, catalyzes the formation of 2-(5''-triphosphoribosyl)-3'-dephosphocoenzyme-A, the precursor of the prosthetic group of the holo-acyl carrier protein (gamma chain) of citrate lyase, from ATP and dephospho-CoA. The sequence is that of 2-(5''-triphosphoribosyl)-3'-dephosphocoenzyme-A synthase from Escherichia fergusonii (strain ATCC 35469 / DSM 13698 / CCUG 18766 / IAM 14443 / JCM 21226 / LMG 7866 / NBRC 102419 / NCTC 12128 / CDC 0568-73).